The sequence spans 430 residues: Adenylosuccinate synthetase (430 aa).

Residues 13–19 (GDEGKGK) and 41–43 (GHT) contribute to the GTP site. Asp-14 (proton acceptor) is an active-site residue. Mg(2+) contacts are provided by Asp-14 and Gly-41. IMP-binding positions include 14-17 (DEGK), 39-42 (NAGH), Thr-130, Arg-144, Gln-225, Thr-240, and Arg-304. Residue His-42 is the Proton donor of the active site. 300–306 (ASTGRPR) is a binding site for substrate. GTP contacts are provided by residues Arg-306, 332–334 (KLD), and 414–416 (STG).

It belongs to the adenylosuccinate synthetase family. As to quaternary structure, homodimer. It depends on Mg(2+) as a cofactor.

The protein resides in the cytoplasm. The catalysed reaction is IMP + L-aspartate + GTP = N(6)-(1,2-dicarboxyethyl)-AMP + GDP + phosphate + 2 H(+). It functions in the pathway purine metabolism; AMP biosynthesis via de novo pathway; AMP from IMP: step 1/2. Its function is as follows. Plays an important role in the de novo pathway of purine nucleotide biosynthesis. Catalyzes the first committed step in the biosynthesis of AMP from IMP. In Xylella fastidiosa (strain M23), this protein is Adenylosuccinate synthetase.